A 185-amino-acid polypeptide reads, in one-letter code: Large ribosomal subunit protein uL5 (185 aa).

It belongs to the universal ribosomal protein uL5 family. As to quaternary structure, part of the 50S ribosomal subunit; part of the 5S rRNA/L5/L18/L25 subcomplex. Contacts the 5S rRNA and the P site tRNA. Forms a bridge to the 30S subunit in the 70S ribosome.

Functionally, this is one of the proteins that bind and probably mediate the attachment of the 5S RNA into the large ribosomal subunit, where it forms part of the central protuberance. In the 70S ribosome it contacts protein S13 of the 30S subunit (bridge B1b), connecting the 2 subunits; this bridge is implicated in subunit movement. Contacts the P site tRNA; the 5S rRNA and some of its associated proteins might help stabilize positioning of ribosome-bound tRNAs. The protein is Large ribosomal subunit protein uL5 of Protochlamydia amoebophila (strain UWE25).